The sequence spans 153 residues: Adenosine 5'-monophosphoramidase HINT3 (153 aa).

The HIT domain occupies 20 to 130 (IFCRIANKQE…PASQLGFLSR (111 aa)). AMP-binding positions include 46–47 (DI) and 115–117 (HLH). The Histidine triad motif motif lies at 113-117 (HLHLH). His-115 serves as the catalytic Tele-AMP-histidine intermediate.

Belongs to the HINT family. As to quaternary structure, forms dimers to octamers and even larger oligomer.

The protein localises to the cytoplasm. Its subcellular location is the nucleus. It catalyses the reaction adenosine 5'-phosphoramidate + H2O = AMP + NH4(+). Exhibits adenosine 5'-monophosphoramidase activity, hydrolyzing purine nucleotide phosphoramidates with a single phosphate group such as adenosine 5'monophosphoramidate (AMP-NH2) to yield AMP and NH2. Hydrolyzes lysyl-AMP (AMP-N-epsilon-(N-alpha-acetyl lysine methyl ester)) generated by lysine tRNA ligase. This is Adenosine 5'-monophosphoramidase HINT3 (hint3) from Xenopus tropicalis (Western clawed frog).